The following is a 642-amino-acid chain: Threonine--tRNA ligase (642 aa).

The region spanning 1–61 (MPIITLPDGS…TEDAELQLIT (61 aa)) is the TGS domain. Residues 242 to 535 (DHRKLGKSLD…LVEHYEGKFP (294 aa)) form a catalytic region. The Zn(2+) site is built by C333, H384, and H512.

This sequence belongs to the class-II aminoacyl-tRNA synthetase family. As to quaternary structure, homodimer. It depends on Zn(2+) as a cofactor.

The protein localises to the cytoplasm. The catalysed reaction is tRNA(Thr) + L-threonine + ATP = L-threonyl-tRNA(Thr) + AMP + diphosphate + H(+). Functionally, catalyzes the attachment of threonine to tRNA(Thr) in a two-step reaction: L-threonine is first activated by ATP to form Thr-AMP and then transferred to the acceptor end of tRNA(Thr). Also edits incorrectly charged L-seryl-tRNA(Thr). The protein is Threonine--tRNA ligase of Hydrogenovibrio crunogenus (strain DSM 25203 / XCL-2) (Thiomicrospira crunogena).